A 335-amino-acid chain; its full sequence is Acetyl-coenzyme A carboxylase carboxyl transferase subunit alpha (335 aa).

In terms of domain architecture, CoA carboxyltransferase C-terminal spans 40-294 (QLETLAARRR…KEAIEKHLNA (255 aa)).

This sequence belongs to the AccA family. In terms of assembly, acetyl-CoA carboxylase is a heterohexamer composed of biotin carboxyl carrier protein (AccB), biotin carboxylase (AccC) and two subunits each of ACCase subunit alpha (AccA) and ACCase subunit beta (AccD).

It localises to the cytoplasm. It carries out the reaction N(6)-carboxybiotinyl-L-lysyl-[protein] + acetyl-CoA = N(6)-biotinyl-L-lysyl-[protein] + malonyl-CoA. Its pathway is lipid metabolism; malonyl-CoA biosynthesis; malonyl-CoA from acetyl-CoA: step 1/1. Functionally, component of the acetyl coenzyme A carboxylase (ACC) complex. First, biotin carboxylase catalyzes the carboxylation of biotin on its carrier protein (BCCP) and then the CO(2) group is transferred by the carboxyltransferase to acetyl-CoA to form malonyl-CoA. This chain is Acetyl-coenzyme A carboxylase carboxyl transferase subunit alpha, found in Prochlorococcus marinus (strain MIT 9301).